Consider the following 331-residue polypeptide: 6-phosphogluconolactonase (331 aa).

Belongs to the cycloisomerase 2 family.

The catalysed reaction is 6-phospho-D-glucono-1,5-lactone + H2O = 6-phospho-D-gluconate + H(+). Its pathway is carbohydrate degradation; pentose phosphate pathway; D-ribulose 5-phosphate from D-glucose 6-phosphate (oxidative stage): step 2/3. Catalyzes the hydrolysis of 6-phosphogluconolactone to 6-phosphogluconate. This is 6-phosphogluconolactonase from Sodalis glossinidius (strain morsitans).